The chain runs to 633 residues: Extracellular metalloproteinase 3 (633 aa).

The N-terminal stretch at 1 to 18 (MHGLLLAGLLALPMNVLA) is a signal peptide. The propeptide occupies 19-246 (HPAEQHASNV…VHNVVDYVAS (228 aa)). Asn410 is a glycosylation site (N-linked (GlcNAc...) asparagine). His429 is a binding site for Zn(2+). Glu430 is a catalytic residue. Zn(2+) is bound at residue His433. N-linked (GlcNAc...) asparagine glycans are attached at residues Asn480 and Asn622.

It belongs to the peptidase M36 family. Zn(2+) serves as cofactor.

The protein localises to the secreted. Secreted metalloproteinase probably acting as a virulence factor. The protein is Extracellular metalloproteinase 3 (MEP3) of Trichophyton equinum (Horse ringworm fungus).